Reading from the N-terminus, the 186-residue chain is Elongation factor P (186 aa).

Belongs to the elongation factor P family.

The protein localises to the cytoplasm. Its pathway is protein biosynthesis; polypeptide chain elongation. Involved in peptide bond synthesis. Stimulates efficient translation and peptide-bond synthesis on native or reconstituted 70S ribosomes in vitro. Probably functions indirectly by altering the affinity of the ribosome for aminoacyl-tRNA, thus increasing their reactivity as acceptors for peptidyl transferase. This chain is Elongation factor P, found in Polynucleobacter necessarius subsp. necessarius (strain STIR1).